Here is a 314-residue protein sequence, read N- to C-terminus: Splicing factor YJU2 (314 aa).

Positions 43, 46, 80, and 83 each coordinate Zn(2+). Disordered regions lie at residues 178–238 (MSQE…NEVP) and 253–314 (LAGL…DSDS). The segment covering 200 to 209 (EEARHRRLLE) has biased composition (basic and acidic residues). 3 positions are modified to phosphoserine: Ser211, Ser213, and Ser220. The span at 222–232 (PRAAARPNPTA) shows a compositional bias: low complexity. A compositionally biased stretch (polar residues) spans 290–302 (PTPQTPGTSSLSQ). Ser309, Ser312, and Ser314 each carry phosphoserine.

It belongs to the CWC16 family. YJU2 subfamily. As to quaternary structure, component of the spliceosome. Present in the activated B complex, the catalytically activated B* complex which catalyzes the branching, the catalytic step 1 C complex catalyzing the exon ligation, and the postcatalytic P complex containing the ligated exons (mRNA) and the excised lariat intron.

Its subcellular location is the nucleus. Its function is as follows. Part of the spliceosome which catalyzes two sequential transesterification reactions, first the excision of the non-coding intron from pre-mRNA and then the ligation of the coding exons to form the mature mRNA. Plays a role in stabilizing the structure of the spliceosome catalytic core and docking of the branch helix into the active site, producing 5'-exon and lariat intron-3'-intermediates. May protect cells from TP53-dependent apoptosis upon dsDNA break damage through association with PRP19-CD5L complex. This chain is Splicing factor YJU2, found in Mus musculus (Mouse).